The chain runs to 1549 residues: Trichohyalin (1549 aa).

Residues 1 to 91 are S-100-like; sequence MSPLLRSIFN…AAACYYALGQ (91 aa). EF-hand domains are found at residues 23-48 and 49-84; these read CDGTTLSKKDLKNLLEREFGEILRKP and HDPETVDLVLELQDRDRDGLIDFHEFLAIVFKVAAA. Ca(2+)-binding residues include Thr27, Asp32, Asp62, Asp64, Asp66, and Glu73. 4 disordered regions span residues 97–125, 157–180, 262–359, and 404–448; these read EKEAKCERKGNPLQDRRREDQRRFEPQDR, LQRREQEEYGGEEELQQRPKGREL, LRRK…KQEQ, and QREK…RQER. Basic and acidic residues-rich tracts occupy residues 171–180, 262–278, and 317–335; these read LQQRPKGREL, LRRKEQERREQQLRQEQ, and HRQEQQSRRQEQELLERQQ. A compositionally biased stretch (low complexity) spans 336-348; it reads EQQISEEVQSLQE. The segment covering 349-359 has biased composition (basic and acidic residues); it reads DQGRQRLKQEQ. Tandem repeats lie at residues 413 to 448, 449 to 476, 477 to 504, 505 to 532, 533 to 560, 561 to 588, 589 to 616, 617 to 644, 645 to 678, 679 to 706, 707 to 742, 743 to 771, 772 to 796, and 797 to 832. Residues 413–832 are 14 X 28 AA approximate tandem repeats; the sequence is ERQYREVELQ…ECEKRRRQEL (420 aa). Disordered stretches follow at residues 782-803, 839-942, and 980-1000; these read REEEQLQREKRRQERERQYREE, EELQ…RKFR, and QLRQERDRKFREELSRQERDR. Composition is skewed to basic and acidic residues over residues 850–884, 895–918, and 925–942; these read FRDDDQHQNEVRNSRVYSKHRENKEKSRQLDDSWV, PLQDEQEEKREREQEWRSRQKRDS, and LLEREQQKETERRDRKFR. 23 consecutive repeat copies span residues 938 to 961, 962 to 985, 986 to 1021, 1022 to 1044, 1045 to 1067, 1068 to 1090, 1091 to 1121, 1122 to 1144, 1145 to 1167, 1168 to 1197, 1198 to 1227, 1228 to 1250, 1251 to 1273, 1274 to 1296, 1297 to 1319, 1320 to 1342, 1343 to 1368, 1369 to 1391, 1392 to 1416, 1417 to 1439, 1440 to 1461, 1462 to 1484, and 1485 to 1507. A 23 X 23 AA approximate tandem repeats region spans residues 938–1507; sequence DRKFREEEQL…ERDVQQSRRQ (570 aa). Residues 1489 to 1523 show a composition bias toward basic and acidic residues; the sequence is QQEEQKRRQERDVQQSRRQVWEEDKGRRQVLEAGK. The disordered stretch occupies residues 1489–1549; sequence QQEEQKRRQE…IQEQRSQYRP (61 aa).

Belongs to the S100-fused protein family. Homodimer. In terms of processing, substrate of transglutaminase. Some 200 arginines are probably converted to citrullines by peptidylarginine deimidase. As to expression, found in the hard keratinizing tissues such as the inner root sheath (IRS) of hair follicles and medulla, and in the epithelia of the tongue, hoof and rumen.

Intermediate filament-associated protein that associates in regular arrays with keratin intermediate filaments (KIF) of the inner root sheath cells of the hair follicle and the granular layer of the epidermis. It later becomes cross-linked to KIF by isodipeptide bonds. It may serve as scaffold protein, together with involucrin, in the organization of the cell envelope or even anchor the cell envelope to the KIF network. It may be involved in its own calcium-dependent postsynthetic processing during terminal differentiation. This Ovis aries (Sheep) protein is Trichohyalin (TCHH).